A 223-amino-acid chain; its full sequence is ATP-dependent dethiobiotin synthetase BioD (223 aa).

Mg(2+) is bound at residue Thr-16. Lys-37 is an active-site residue. Ser-41 provides a ligand contact to substrate. Residues Asp-50 and Glu-111 each coordinate Mg(2+). Residues Asp-50, 111 to 114 (EGAG), 171 to 172 (NQ), 201 to 203 (AHV), and Glu-208 each bind ATP.

This sequence belongs to the dethiobiotin synthetase family. In terms of assembly, homodimer. The cofactor is Mg(2+).

It is found in the cytoplasm. The catalysed reaction is (7R,8S)-7,8-diammoniononanoate + CO2 + ATP = (4R,5S)-dethiobiotin + ADP + phosphate + 3 H(+). It functions in the pathway cofactor biosynthesis; biotin biosynthesis; biotin from 7,8-diaminononanoate: step 1/2. Functionally, catalyzes a mechanistically unusual reaction, the ATP-dependent insertion of CO2 between the N7 and N8 nitrogen atoms of 7,8-diaminopelargonic acid (DAPA, also called 7,8-diammoniononanoate) to form a ureido ring. This is ATP-dependent dethiobiotin synthetase BioD from Anaeromyxobacter sp. (strain Fw109-5).